A 205-amino-acid polypeptide reads, in one-letter code: Large ribosomal subunit protein uL4 (205 aa).

A disordered region spans residues 43–97 (GKRQGTSKVKNRSAVRGGGKKPWRQKGTGRARQGSIRAPQWRGGGTVFGPTPRSY). The span at 51-71 (VKNRSAVRGGGKKPWRQKGTG) shows a compositional bias: basic residues.

It belongs to the universal ribosomal protein uL4 family. Part of the 50S ribosomal subunit.

One of the primary rRNA binding proteins, this protein initially binds near the 5'-end of the 23S rRNA. It is important during the early stages of 50S assembly. It makes multiple contacts with different domains of the 23S rRNA in the assembled 50S subunit and ribosome. In terms of biological role, forms part of the polypeptide exit tunnel. This is Large ribosomal subunit protein uL4 from Lactobacillus acidophilus (strain ATCC 700396 / NCK56 / N2 / NCFM).